Consider the following 180-residue polypeptide: Shikimate kinase (180 aa).

14–19 contacts ATP; the sequence is GAGKSC. Ser-18 contributes to the Mg(2+) binding site. Positions 36, 60, and 82 each coordinate substrate. Position 120 (Arg-120) interacts with ATP. Position 139 (Arg-139) interacts with substrate.

It belongs to the shikimate kinase family. In terms of assembly, monomer. Mg(2+) is required as a cofactor.

It localises to the cytoplasm. The enzyme catalyses shikimate + ATP = 3-phosphoshikimate + ADP + H(+). It participates in metabolic intermediate biosynthesis; chorismate biosynthesis; chorismate from D-erythrose 4-phosphate and phosphoenolpyruvate: step 5/7. Its function is as follows. Catalyzes the specific phosphorylation of the 3-hydroxyl group of shikimic acid using ATP as a cosubstrate. This chain is Shikimate kinase, found in Xanthomonas campestris pv. campestris (strain 8004).